The sequence spans 623 residues: Heterogeneous nuclear ribonucleoprotein Q (623 aa).

Ala2 bears the N-acetylalanine mark. Ser159 bears the Phosphoserine mark. RRM domains follow at residues 162–241 (TEIF…ISVA), 243–325 (NRLF…WADP), and 338–408 (KVLF…FAKP). Residue Lys168 forms a Glycyl lysine isopeptide (Lys-Gly) (interchain with G-Cter in SUMO2) linkage. N6-acetyllysine is present on Lys221. An N6-acetyllysine modification is found at Lys363. Position 373 is a phosphotyrosine (Tyr373). The segment at 400–561 (NIEIVFAKPP…GARGGRGGNV (162 aa)) is interaction with APOBEC1. Asymmetric dimethylarginine; by PRMT1; alternate is present on Arg444. At Arg444 the chain carries Omega-N-methylarginine; by PRMT1; alternate. 6 consecutive repeat copies span residues 448-450 (RGG), 451-453 (RGG), 460-464 (YYGYE), 469-472 (YYGY), 478-480 (RGG), and 485-488 (YYGY). An 8 X 3 AA repeats of R-G-G region spans residues 448 to 559 (RGGRGGYGYP…VRGARGGRGG (112 aa)). Residues 460 to 488 (YYGYEDYYDYYGYDYHNYRGGYEDPYYGY) form a 3 X 4 AA repeats of Y-Y-G-Y region. Residue Arg496 is modified to Omega-N-methylarginine; by PRMT1. Residues 497 to 623 (GRGGRGARGA…YQDTFGQQWK (127 aa)) are disordered. The stretch at 498 to 500 (RGG) is one 1-4 repeat. A compositionally biased stretch (low complexity) spans 504–522 (RGAAPSRGRGAAPPRGRAG). Arg510 carries the asymmetric dimethylarginine; by PRMT1 modification. Arg518, Arg526, Arg536, and Arg539 each carry asymmetric dimethylarginine; by PRMT1; alternate. Omega-N-methylarginine; by PRMT1; alternate occurs at positions 518, 526, 536, and 539. The segment at 518–549 (RGRAGYSQRGGPGSARGVRGARGGAQQQRGRG) is interaction with SMN. A 1-5 repeat occupies 526–528 (RGG). Repeat copies occupy residues 539–541 (RGG), 554–556 (RGG), and 557–559 (RGG). The span at 550–562 (VRGARGGRGGNVG) shows a compositional bias: gly residues. The short motif at 564 to 578 (KRKADGYNQPDSKRR) is the Bipartite nuclear localization signal element. Residues 580 to 595 (TNNQNWGSQPIAQQPL) show a composition bias toward polar residues. Ser587 carries the post-translational modification Phosphoserine. Residue Lys607 forms a Glycyl lysine isopeptide (Lys-Gly) (interchain with G-Cter in SUMO2) linkage. Residues 611-623 (QEFYQDTFGQQWK) are compositionally biased toward polar residues.

In terms of assembly, isoform 1 is a component of the APOB mRNA editosome complex and interacts with APOBEC1 and A1CF (APOBEC1 complementation factor). Part of a complex associated with the FOS mCRD domain and consisting of PABPC1, PAIP1, CSDE1/UNR, HNRPD and SYNCRIP. Isoform 3 interacts with HNRPR. Interacts with POLR2A hyperphosphorylated C-terminal domain. Isoform 1, isoform 2 and isoform 3 interact with SMN. Isoform 3 interacts through its C-terminal domain with SYT7, SYT8 and SYT9. The non-phosphorylated and phosphorylated forms are colocalized with PAIP1 in polysomes. Interacts with HABP4. Identified in a histone pre-mRNA complex, at least composed of ERI1, LSM11, SLBP, SNRPB, SYNCRIP and YBX1. Identified in the spliceosome C complex. Component of the coding region determinant (CRD)-mediated complex, composed of DHX9, HNRNPU, IGF2BP1, SYNCRIP and YBX1. Identified in a mRNP complex, at least composed of DHX9, DDX3X, ELAVL1, HNRNPU, IGF2BP1, ILF3, PABPC1, PCBP2, PTBP2, STAU1, STAU2, SYNCRIP and YBX1. Identified in a mRNP granule complex, at least composed of ACTB, ACTN4, DHX9, ERG, HNRNPA1, HNRNPA2B1, HNRNPAB, HNRNPD, HNRNPL, HNRNPR, HNRNPU, HSPA1, HSPA8, IGF2BP1, ILF2, ILF3, NCBP1, NCL, PABPC1, PABPC4, PABPN1, RPLP0, RPS3, RPS3A, RPS4X, RPS8, RPS9, SYNCRIP, YBX1 and untranslated mRNAs. Interacts with GTPBP1. Component of the GAIT complex; in humans the complex assembly seems to be a two-step process in which EPRS1 first associates with SYNCRIP to form a pre-GAIT complex which is deficient in GAIT element binding. (Microbial infection) Interacts with minute virus of mice (MVM) NS1 protein. As to quaternary structure, (Microbial infection) Interacts with herpes virus 8/HHV-8 protein vIRF-1; this interaction induces ubiquitination and degradation of SYNCRIP. In terms of processing, phosphorylated on tyrosine. The membrane-bound form found in microsomes is phosphorylated in vitro by insulin receptor tyrosine kinase (INSR). Phosphorylation is inhibited upon binding to RNA, whereas the cytoplasmic form is poorly phosphorylated. Ubiquitously expressed. Detected in heart, brain, pancreas, placenta, spleen, lung, liver, skeletal muscle, kidney, thymus, prostate, uterus, small intestine, colon, peripheral blood and testis.

The protein resides in the cytoplasm. Its subcellular location is the microsome. The protein localises to the endoplasmic reticulum. It is found in the nucleus. It localises to the nucleoplasm. Functionally, heterogenous nuclear ribonucleoprotein (hnRNP) implicated in mRNA processing mechanisms. Component of the CRD-mediated complex that promotes MYC mRNA stability. Isoform 1, isoform 2 and isoform 3 are associated in vitro with pre-mRNA, splicing intermediates and mature mRNA protein complexes. Isoform 1 binds to apoB mRNA AU-rich sequences. Isoform 1 is part of the APOB mRNA editosome complex and may modulate the postranscriptional C to U RNA-editing of the APOB mRNA through either by binding to A1CF (APOBEC1 complementation factor), to APOBEC1 or to RNA itself. May be involved in translationally coupled mRNA turnover. Implicated with other RNA-binding proteins in the cytoplasmic deadenylation/translational and decay interplay of the FOS mRNA mediated by the major coding-region determinant of instability (mCRD) domain. Interacts in vitro preferentially with poly(A) and poly(U) RNA sequences. Isoform 3 may be involved in cytoplasmic vesicle-based mRNA transport through interaction with synaptotagmins. Component of the GAIT (gamma interferon-activated inhibitor of translation) complex which mediates interferon-gamma-induced transcript-selective translation inhibition in inflammation processes. Upon interferon-gamma activation assembles into the GAIT complex which binds to stem loop-containing GAIT elements in the 3'-UTR of diverse inflammatory mRNAs (such as ceruplasmin) and suppresses their translation; seems not to be essential for GAIT complex function. The polypeptide is Heterogeneous nuclear ribonucleoprotein Q (SYNCRIP) (Homo sapiens (Human)).